The sequence spans 324 residues: Aspartate carbamoyltransferase catalytic subunit (324 aa).

Residues arginine 71 and threonine 72 each coordinate carbamoyl phosphate. Residue lysine 99 coordinates L-aspartate. Carbamoyl phosphate is bound by residues arginine 121, histidine 151, and glutamine 154. 2 residues coordinate L-aspartate: arginine 184 and arginine 239. 2 residues coordinate carbamoyl phosphate: glycine 280 and proline 281.

Belongs to the aspartate/ornithine carbamoyltransferase superfamily. ATCase family. As to quaternary structure, heterododecamer (2C3:3R2) of six catalytic PyrB chains organized as two trimers (C3), and six regulatory PyrI chains organized as three dimers (R2).

The enzyme catalyses carbamoyl phosphate + L-aspartate = N-carbamoyl-L-aspartate + phosphate + H(+). It functions in the pathway pyrimidine metabolism; UMP biosynthesis via de novo pathway; (S)-dihydroorotate from bicarbonate: step 2/3. Functionally, catalyzes the condensation of carbamoyl phosphate and aspartate to form carbamoyl aspartate and inorganic phosphate, the committed step in the de novo pyrimidine nucleotide biosynthesis pathway. The sequence is that of Aspartate carbamoyltransferase catalytic subunit from Cupriavidus necator (strain ATCC 17699 / DSM 428 / KCTC 22496 / NCIMB 10442 / H16 / Stanier 337) (Ralstonia eutropha).